Reading from the N-terminus, the 139-residue chain is Small ribosomal subunit protein uS12 (139 aa).

A disordered region spans residues 1–21 (MSTVSQLIKKRRSSKTSKTKA). Residues 8-18 (IKKRRSSKTSK) show a composition bias toward basic residues.

Belongs to the universal ribosomal protein uS12 family. Part of the 30S ribosomal subunit. Contacts proteins S8 and S17. May interact with IF1 in the 30S initiation complex.

Its function is as follows. With S4 and S5 plays an important role in translational accuracy. In terms of biological role, interacts with and stabilizes bases of the 16S rRNA that are involved in tRNA selection in the A site and with the mRNA backbone. Located at the interface of the 30S and 50S subunits, it traverses the body of the 30S subunit contacting proteins on the other side and probably holding the rRNA structure together. The combined cluster of proteins S8, S12 and S17 appears to hold together the shoulder and platform of the 30S subunit. In Onion yellows phytoplasma (strain OY-M), this protein is Small ribosomal subunit protein uS12.